Reading from the N-terminus, the 291-residue chain is S-methyl-5'-thioadenosine phosphorylase (291 aa).

Phosphate contacts are provided by residues Ser-12, 54 to 55 (RH), and 87 to 88 (SA). Met-185 serves as a coordination point for substrate. Thr-186 contacts phosphate. Residue 209-211 (DFD) coordinates substrate.

The protein belongs to the PNP/MTAP phosphorylase family. MTAP subfamily. In terms of assembly, homohexamer. Dimer of a homotrimer.

It carries out the reaction S-methyl-5'-thioadenosine + phosphate = 5-(methylsulfanyl)-alpha-D-ribose 1-phosphate + adenine. It functions in the pathway amino-acid biosynthesis; L-methionine biosynthesis via salvage pathway; S-methyl-5-thio-alpha-D-ribose 1-phosphate from S-methyl-5'-thioadenosine (phosphorylase route): step 1/1. Catalyzes the reversible phosphorylation of S-methyl-5'-thioadenosine (MTA) to adenine and 5-methylthioribose-1-phosphate. Involved in the breakdown of MTA, a major by-product of polyamine biosynthesis. Responsible for the first step in the methionine salvage pathway after MTA has been generated from S-adenosylmethionine. Has broad substrate specificity with 6-aminopurine nucleosides as preferred substrates. This chain is S-methyl-5'-thioadenosine phosphorylase, found in Bradyrhizobium diazoefficiens (strain JCM 10833 / BCRC 13528 / IAM 13628 / NBRC 14792 / USDA 110).